A 280-amino-acid polypeptide reads, in one-letter code: SPX domain-containing protein 2 (280 aa).

One can recognise an SPX domain in the interval 1–162 (MKFGKSLSSQ…GSMIRLPFVQ (162 aa)). Disordered regions lie at residues 191–244 (PTNE…KSTV) and 257–280 (GSSTVSVFSLPPLHGSNGQDEPGR).

Interacts (via SPX domain) with PHR2 (via C-terminus). Interacts with RLI1 in the nucleus to prevents its positive regulation of leaf inclination during phosphate (Pi) starvation. Predominantly expressed in roots, leaves and seeds. Localized in leaves lamina joints.

It is found in the nucleus. Inhibits PHR2 DNA-binding activity via a phosphate (Pi)-dependent protein interaction. Together with SPX1, plays a negative role in the regulation of leaf inclination by preventing RLI1 transcription factor activity in Pi depleted conditions. This chain is SPX domain-containing protein 2, found in Oryza sativa subsp. japonica (Rice).